We begin with the raw amino-acid sequence, 122 residues long: Urease subunit beta (122 aa).

The protein belongs to the urease beta subunit family. Heterotrimer of UreA (gamma), UreB (beta) and UreC (alpha) subunits. Three heterotrimers associate to form the active enzyme.

It localises to the cytoplasm. The catalysed reaction is urea + 2 H2O + H(+) = hydrogencarbonate + 2 NH4(+). Its pathway is nitrogen metabolism; urea degradation; CO(2) and NH(3) from urea (urease route): step 1/1. This chain is Urease subunit beta, found in Flavobacterium johnsoniae (strain ATCC 17061 / DSM 2064 / JCM 8514 / BCRC 14874 / CCUG 350202 / NBRC 14942 / NCIMB 11054 / UW101) (Cytophaga johnsonae).